Reading from the N-terminus, the 449-residue chain is Tubulin alpha-2 chain (449 aa).

Positions 11, 71, 140, 144, 145, 179, 206, and 228 each coordinate GTP. Glu71 provides a ligand contact to Mg(2+). Residue Glu254 is part of the active site.

Belongs to the tubulin family. In terms of assembly, dimer of alpha and beta chains. A typical microtubule is a hollow water-filled tube with an outer diameter of 25 nm and an inner diameter of 15 nM. Alpha-beta heterodimers associate head-to-tail to form protofilaments running lengthwise along the microtubule wall with the beta-tubulin subunit facing the microtubule plus end conferring a structural polarity. Microtubules usually have 13 protofilaments but different protofilament numbers can be found in some organisms and specialized cells. Mg(2+) serves as cofactor.

Its subcellular location is the cytoplasm. It is found in the cytoskeleton. The catalysed reaction is GTP + H2O = GDP + phosphate + H(+). Tubulin is the major constituent of microtubules, a cylinder consisting of laterally associated linear protofilaments composed of alpha- and beta-tubulin heterodimers. Microtubules grow by the addition of GTP-tubulin dimers to the microtubule end, where a stabilizing cap forms. Below the cap, tubulin dimers are in GDP-bound state, owing to GTPase activity of alpha-tubulin. The sequence is that of Tubulin alpha-2 chain (tub1) from Schizosaccharomyces pombe (strain 972 / ATCC 24843) (Fission yeast).